Reading from the N-terminus, the 291-residue chain is Popeye domain-containing protein 3 (291 aa).

Asn4 carries an N-linked (GlcNAc...) asparagine glycan. The next 3 helical transmembrane spans lie at 27 to 44 (GAIY…FMGG), 48 to 70 (FGLL…WAWV), and 77 to 99 (IFSW…AYQV).

It belongs to the popeye family. As to expression, expressed predominantly in skeletal muscle (at protein level). Also detected in heart.

It is found in the membrane. May play a role in the maintenance of heart function mediated, at least in part, through cAMP-binding. May play a role in the regulation of KCNK2/TREK-1-mediated current amplitude. The polypeptide is Popeye domain-containing protein 3 (POPDC3) (Homo sapiens (Human)).